A 178-amino-acid polypeptide reads, in one-letter code: Transcription termination/antitermination protein NusG (178 aa).

One can recognise a KOW domain in the interval 126–156; sequence VGQQVRVNEGPFADFNGVVEEVNYERNKLRV.

Belongs to the NusG family.

Its function is as follows. Participates in transcription elongation, termination and antitermination. This is Transcription termination/antitermination protein NusG from Neisseria meningitidis serogroup B (strain ATCC BAA-335 / MC58).